A 609-amino-acid chain; its full sequence is Elongation factor 4 (609 aa).

Positions 11 to 193 (ERIRNFSIIA…QIVEKIPAPS (183 aa)) constitute a tr-type G domain. Residues 23–28 (DHGKST) and 140–143 (NKID) each bind GTP.

Belongs to the TRAFAC class translation factor GTPase superfamily. Classic translation factor GTPase family. LepA subfamily.

The protein resides in the cell membrane. The enzyme catalyses GTP + H2O = GDP + phosphate + H(+). In terms of biological role, required for accurate and efficient protein synthesis under certain stress conditions. May act as a fidelity factor of the translation reaction, by catalyzing a one-codon backward translocation of tRNAs on improperly translocated ribosomes. Back-translocation proceeds from a post-translocation (POST) complex to a pre-translocation (PRE) complex, thus giving elongation factor G a second chance to translocate the tRNAs correctly. Binds to ribosomes in a GTP-dependent manner. This Geobacillus thermodenitrificans (strain NG80-2) protein is Elongation factor 4.